The chain runs to 352 residues: Histidinol-phosphate aminotransferase (352 aa).

Position 211 is an N6-(pyridoxal phosphate)lysine (Lys211).

The protein belongs to the class-II pyridoxal-phosphate-dependent aminotransferase family. Histidinol-phosphate aminotransferase subfamily. As to quaternary structure, homodimer. Pyridoxal 5'-phosphate serves as cofactor.

It carries out the reaction L-histidinol phosphate + 2-oxoglutarate = 3-(imidazol-4-yl)-2-oxopropyl phosphate + L-glutamate. Its pathway is amino-acid biosynthesis; L-histidine biosynthesis; L-histidine from 5-phospho-alpha-D-ribose 1-diphosphate: step 7/9. This is Histidinol-phosphate aminotransferase from Haemophilus influenzae (strain PittEE).